The chain runs to 1059 residues: Tyrosine-protein kinase-like otk (1059 aa).

The first 23 residues, 1 to 23 (MDMLMMWSICLFVCIFMAPFSCG), serve as a signal peptide directing secretion. The Extracellular segment spans residues 24 to 597 (SGSSSRFIQV…GDGGFLATRA (574 aa)). 5 Ig-like C2-type domains span residues 28–112 (SRFI…REAS), 113–202 (PTAK…RVMS), 258–377 (PEGL…LAIN), 380–475 (PGIL…VSIN), and 480–570 (PKFS…AVLT). The N-linked (GlcNAc...) asparagine glycan is linked to N42. 4 disulfides stabilise this stretch: C49–C99, C141–C191, C283–C366, and C411–C459. 7 N-linked (GlcNAc...) asparagine glycosylation sites follow: N348, N429, N441, N456, N469, N524, and N536. A disulfide bridge links C502 with C554. The helical transmembrane segment at 598–618 (VLITMTVALAYIVLVVGLMLW) threads the bilayer. The Cytoplasmic portion of the chain corresponds to 619-1059 (CRYRRQARKA…ALSKAMQNSE (441 aa)). Positions 639 to 695 (GGEQAGGEGSTSGNPKASEQEPCLGKQQRNGRNGKSKSNGDPQKSDDTACSQQSRAS) are disordered. The segment covering 665–693 (QQRNGRNGKSKSNGDPQKSDDTACSQQSR) has biased composition (polar residues). S698 is subject to Phosphoserine. One can recognise a Protein kinase; inactive domain in the interval 712 to 1055 (LSELIQIGRG…QLGAALSKAM (344 aa)). The tract at residues 739–781 (AQANDKDSDNDKQHSNSENGSGGSSGSTTLSTLNEKRRSKTSM) is disordered. Over residues 742–753 (NDKDSDNDKQHS) the composition is skewed to basic and acidic residues.

This sequence belongs to the protein kinase superfamily. Tyr protein kinase family. Insulin receptor subfamily. As to quaternary structure, interacts with plexA; component of a receptor complex that mediates the repulsive signaling in response to Semaphorin ligands.

It localises to the cell membrane. Its function is as follows. Acts as a calcium-dependent, homophilic cell adhesion molecule that regulates neural recognition during the development of the nervous system. Component of the repulsive Plexin signaling response to regulate motor axon guidance at the embryonic stage. Also component of a receptor complex that is required in the adult visual system to innervate the lamina layer; specific targeting of R1-R6 axons. The polypeptide is Tyrosine-protein kinase-like otk (Drosophila willistoni (Fruit fly)).